The following is a 326-amino-acid chain: Protein-arginine N-acetylglucosaminyltransferase NleB2 (326 aa).

UDP-N-acetyl-alpha-D-glucosamine-binding positions include 45–47 (QWF), Tyr-69, and 216–219 (YLDM). Positions 218–220 (DMD) match the DXD motif motif. Mn(2+) is bound at residue Asp-220. The active-site Proton acceptor is the Glu-250. The Mn(2+) site is built by Asn-317 and Ser-319. UDP-N-acetyl-alpha-D-glucosamine-binding positions include Ser-319 and 324–326 (SSW).

Belongs to the glycosyltransferase NleB family. It depends on Mn(2+) as a cofactor.

It localises to the secreted. Its subcellular location is the host cell. It catalyses the reaction L-arginyl-[protein] + UDP-N-acetyl-alpha-D-glucosamine = N(omega)-(N-acetyl-beta-D-glucosaminyl)-L-arginyl-[protein] + UDP + H(+). Its function is as follows. Protein-arginine N-acetylglucosaminyltransferase effector that catalyzes the transfer of a single N-acetylglucosamine (GlcNAc) to a conserved arginine residue of host target proteins. In contrast to NleB1, not able to disrupt TNF signaling in infected cells. Shows a lower enzymatic activity than NleB1. This is Protein-arginine N-acetylglucosaminyltransferase NleB2 from Escherichia coli O145:H28 (strain RM12581).